Reading from the N-terminus, the 206-residue chain is VEL1-related protein YOR387C (206 aa).

Residues 1–19 (MSFLNIFTFFSVLVSVATA) form the signal peptide. Asparagine 26, asparagine 48, asparagine 91, asparagine 139, asparagine 152, and asparagine 183 each carry an N-linked (GlcNAc...) asparagine glycan.

The protein belongs to the VEL1 family. In terms of processing, N-glycosylated.

The protein localises to the cytoplasm. The protein resides in the cytosol. In Saccharomyces cerevisiae (strain ATCC 204508 / S288c) (Baker's yeast), this protein is VEL1-related protein YOR387C.